We begin with the raw amino-acid sequence, 807 residues long: Spondin-1 (807 aa).

The signal sequence occupies residues 1–28; the sequence is MRLSPAPLRLSRGPALLALALPLAAALA. The Reelin domain maps to 29-194; that stretch reads FSDETLDKVA…DPTLDGVTDR (166 aa). Disulfide bonds link Cys-44–Cys-128, Cys-156–Cys-182, Cys-199–Cys-336, Cys-200–Cys-340, Cys-202–Cys-415, Cys-443–Cys-480, Cys-454–Cys-489, Cys-459–Cys-494, Cys-502–Cys-538, Cys-513–Cys-517, Cys-548–Cys-554, Cys-559–Cys-595, Cys-570–Cys-574, Cys-605–Cys-610, Cys-615–Cys-650, Cys-626–Cys-630, and Cys-660–Cys-665. The Spondin domain maps to 195–388; the sequence is PILDCCACGT…LTSLDHPQSP (194 aa). Asn-214 is a glycosylation site (N-linked (GlcNAc...) asparagine). Ca(2+) is bound by residues Asp-325, Asp-354, and Asp-358. TSP type-1 domains are found at residues 442 to 495, 501 to 555, 558 to 611, 614 to 666, and 668 to 721; these read TCIY…PGCS, TCTM…EECS, SCLV…PECH, PCLL…PECP, and DCEL…RKCL. A glycan (N-linked (GlcNAc...) asparagine) is linked at Asn-681. A compositionally biased stretch (basic and acidic residues) spans 732–746; it reads REARESRRSEQLREE. Residues 732–752 form a disordered region; that stretch reads REARESRRSEQLREESDGEQF. The region spanning 754–806 is the TSP type-1 6 domain; sequence GCRMRPWTAWSECTKLCGGGIQERYMTVKKRFKSSQFTSCKDKKEIRACNVHP.

In terms of assembly, binds to the central extracellular domain of APP and inhibits beta-secretase cleavage of APP. In terms of tissue distribution, expressed at high levels in the floor plate.

It localises to the secreted. The protein resides in the extracellular space. It is found in the extracellular matrix. Its function is as follows. Cell adhesion protein that promotes the attachment of spinal cord and sensory neuron cells and the outgrowth of neurites in vitro. May contribute to the growth and guidance of axons in both the spinal cord and the PNS. The protein is Spondin-1 (Spon1) of Rattus norvegicus (Rat).